Reading from the N-terminus, the 716-residue chain is DNA ligase (716 aa).

NAD(+) is bound by residues 50–54 (DAEYD), 99–100 (SL), and glutamate 132. Catalysis depends on lysine 134, which acts as the N6-AMP-lysine intermediate. 4 residues coordinate NAD(+): arginine 155, glutamate 192, lysine 308, and lysine 332. Residues cysteine 437, cysteine 439, cysteine 461, and cysteine 467 each contribute to the Zn(2+) site. Residues 638 to 716 (KSNSAVAGKT…EDEWLKLIGE (79 aa)) form the BRCT domain.

This sequence belongs to the NAD-dependent DNA ligase family. LigA subfamily. Mg(2+) serves as cofactor. Requires Mn(2+) as cofactor.

The catalysed reaction is NAD(+) + (deoxyribonucleotide)n-3'-hydroxyl + 5'-phospho-(deoxyribonucleotide)m = (deoxyribonucleotide)n+m + AMP + beta-nicotinamide D-nucleotide.. Its function is as follows. DNA ligase that catalyzes the formation of phosphodiester linkages between 5'-phosphoryl and 3'-hydroxyl groups in double-stranded DNA using NAD as a coenzyme and as the energy source for the reaction. It is essential for DNA replication and repair of damaged DNA. This Bradyrhizobium diazoefficiens (strain JCM 10833 / BCRC 13528 / IAM 13628 / NBRC 14792 / USDA 110) protein is DNA ligase.